Here is a 146-residue protein sequence, read N- to C-terminus: Transcriptional regulator MraZ (146 aa).

SpoVT-AbrB domains lie at 5-47 and 76-119; these read EYYH…TITD and SIQV…AKEK.

This sequence belongs to the MraZ family. In terms of assembly, forms oligomers.

Its subcellular location is the cytoplasm. The protein localises to the nucleoid. The protein is Transcriptional regulator MraZ of Dictyoglomus thermophilum (strain ATCC 35947 / DSM 3960 / H-6-12).